The chain runs to 204 residues: Ribosomal RNA large subunit methyltransferase E (204 aa).

S-adenosyl-L-methionine contacts are provided by Gly-49, Trp-51, Asp-69, Asn-87, and Asp-111. The active-site Proton acceptor is Lys-151.

It belongs to the class I-like SAM-binding methyltransferase superfamily. RNA methyltransferase RlmE family.

The protein resides in the cytoplasm. The enzyme catalyses uridine(2552) in 23S rRNA + S-adenosyl-L-methionine = 2'-O-methyluridine(2552) in 23S rRNA + S-adenosyl-L-homocysteine + H(+). Specifically methylates the uridine in position 2552 of 23S rRNA at the 2'-O position of the ribose in the fully assembled 50S ribosomal subunit. The protein is Ribosomal RNA large subunit methyltransferase E of Nitratidesulfovibrio vulgaris (strain ATCC 29579 / DSM 644 / CCUG 34227 / NCIMB 8303 / VKM B-1760 / Hildenborough) (Desulfovibrio vulgaris).